The chain runs to 489 residues: Phenylalanine--tRNA ligase alpha subunit (489 aa).

L-phenylalanine-binding positions include Thr-316, 355-357, Phe-395, and Phe-420; that span reads QLD.

This sequence belongs to the class-II aminoacyl-tRNA synthetase family. Phe-tRNA synthetase alpha subunit type 2 subfamily. Tetramer of two alpha and two beta subunits. Requires Mg(2+) as cofactor.

It is found in the cytoplasm. It catalyses the reaction tRNA(Phe) + L-phenylalanine + ATP = L-phenylalanyl-tRNA(Phe) + AMP + diphosphate + H(+). The sequence is that of Phenylalanine--tRNA ligase alpha subunit from Pyrobaculum aerophilum (strain ATCC 51768 / DSM 7523 / JCM 9630 / CIP 104966 / NBRC 100827 / IM2).